A 331-amino-acid chain; its full sequence is Holliday junction branch migration complex subunit RuvB (331 aa).

Positions 4-182 are large ATPase domain (RuvB-L); sequence KDILQSSECI…FGIPMHLEFY (179 aa). ATP contacts are provided by residues Arg-22, Gly-63, Lys-66, Thr-67, Thr-68, 129–131, Arg-172, Tyr-182, and Arg-219; that span reads EDF. Position 67 (Thr-67) interacts with Mg(2+). A small ATPAse domain (RuvB-S) region spans residues 183 to 253; it reads STEELTKVIK…FADQALLRLG (71 aa). The head domain (RuvB-H) stretch occupies residues 256-331; sequence KLGLDRQDIK…SYLNEQTYNM (76 aa). The DNA site is built by Arg-309 and Arg-314.

It belongs to the RuvB family. Homohexamer. Forms an RuvA(8)-RuvB(12)-Holliday junction (HJ) complex. HJ DNA is sandwiched between 2 RuvA tetramers; dsDNA enters through RuvA and exits via RuvB. An RuvB hexamer assembles on each DNA strand where it exits the tetramer. Each RuvB hexamer is contacted by two RuvA subunits (via domain III) on 2 adjacent RuvB subunits; this complex drives branch migration. In the full resolvosome a probable DNA-RuvA(4)-RuvB(12)-RuvC(2) complex forms which resolves the HJ.

It is found in the cytoplasm. The catalysed reaction is ATP + H2O = ADP + phosphate + H(+). The RuvA-RuvB-RuvC complex processes Holliday junction (HJ) DNA during genetic recombination and DNA repair, while the RuvA-RuvB complex plays an important role in the rescue of blocked DNA replication forks via replication fork reversal (RFR). RuvA specifically binds to HJ cruciform DNA, conferring on it an open structure. The RuvB hexamer acts as an ATP-dependent pump, pulling dsDNA into and through the RuvAB complex. RuvB forms 2 homohexamers on either side of HJ DNA bound by 1 or 2 RuvA tetramers; 4 subunits per hexamer contact DNA at a time. Coordinated motions by a converter formed by DNA-disengaged RuvB subunits stimulates ATP hydrolysis and nucleotide exchange. Immobilization of the converter enables RuvB to convert the ATP-contained energy into a lever motion, pulling 2 nucleotides of DNA out of the RuvA tetramer per ATP hydrolyzed, thus driving DNA branch migration. The RuvB motors rotate together with the DNA substrate, which together with the progressing nucleotide cycle form the mechanistic basis for DNA recombination by continuous HJ branch migration. Branch migration allows RuvC to scan DNA until it finds its consensus sequence, where it cleaves and resolves cruciform DNA. The sequence is that of Holliday junction branch migration complex subunit RuvB from Ehrlichia ruminantium (strain Gardel).